The following is an 82-amino-acid chain: Large ribosomal subunit protein bL31B (82 aa).

The protein belongs to the bacterial ribosomal protein bL31 family. Type B subfamily. Part of the 50S ribosomal subunit.

This is Large ribosomal subunit protein bL31B from Proteus mirabilis (strain HI4320).